Reading from the N-terminus, the 83-residue chain is Small ribosomal subunit protein bS16 (83 aa).

The protein belongs to the bacterial ribosomal protein bS16 family.

This Magnetococcus marinus (strain ATCC BAA-1437 / JCM 17883 / MC-1) protein is Small ribosomal subunit protein bS16.